A 166-amino-acid chain; its full sequence is Putative tRNA (cytidine(34)-2'-O)-methyltransferase (166 aa).

Residues L83, G109, I130, and S138 each coordinate S-adenosyl-L-methionine.

It belongs to the class IV-like SAM-binding methyltransferase superfamily. RNA methyltransferase TrmH family. TrmL subfamily.

The protein resides in the cytoplasm. It catalyses the reaction cytidine(34) in tRNA + S-adenosyl-L-methionine = 2'-O-methylcytidine(34) in tRNA + S-adenosyl-L-homocysteine + H(+). It carries out the reaction 5-carboxymethylaminomethyluridine(34) in tRNA(Leu) + S-adenosyl-L-methionine = 5-carboxymethylaminomethyl-2'-O-methyluridine(34) in tRNA(Leu) + S-adenosyl-L-homocysteine + H(+). In terms of biological role, could methylate the ribose at the nucleotide 34 wobble position in tRNA. The sequence is that of Putative tRNA (cytidine(34)-2'-O)-methyltransferase from Mycoplasma pneumoniae (strain ATCC 29342 / M129 / Subtype 1) (Mycoplasmoides pneumoniae).